A 397-amino-acid chain; its full sequence is Lysophospholipid transporter LplT (397 aa).

The Periplasmic segment spans residues 1–17 (MSESVHTNTSLWSKGMK). Residues 18-38 (AVIVAQFLSAFGDNALLFATL) form a helical membrane-spanning segment. Residues 39–52 (ALLKAQFYPEWSQP) lie on the Cytoplasmic side of the membrane. Residues 53 to 73 (ILQMVFVGAYILFAPFVGQVA) traverse the membrane as a helical segment. The Periplasmic segment spans residues 74-90 (DSFAKGRVMMFANGLKL). Residues 91-111 (LGAASICFGINPFLGYTLVGV) traverse the membrane as a helical segment. Residues 112 to 144 (GAAAYSPAKYGILGELTTGSKLVKANGLMEAST) are Cytoplasmic-facing. A helical membrane pass occupies residues 145 to 165 (IAAILLGSVAGGVLADWHVLV). Position 166 (Ala-166) is a topological domain, periplasmic. The helical transmembrane segment at 167 to 187 (LAACALAYGGAVVANIYIPKL) threads the bilayer. Over 188-226 (AAARPGQSWNLINMTRSFLNACTSLWRNGETRFSLVGTS) the chain is Cytoplasmic. A helical transmembrane segment spans residues 227–247 (LFWGAGVTLRFLLVLWVPVAL). The Periplasmic portion of the chain corresponds to 248–256 (GITDNATPT). A helical membrane pass occupies residues 257 to 277 (YLNAMVAIGIVVGAGAAAKLV). Over 278–280 (TLE) the chain is Cytoplasmic. Residues 281 to 301 (TVSRCMPAGILIGVVVLIFSL) form a helical membrane-spanning segment. The Periplasmic portion of the chain corresponds to 302-304 (QHE). The chain crosses the membrane as a helical span at residues 305-325 (LLPAYALLMLIGVLGGFFVVP). Residues 326–343 (LNALLQERGKKSVGAGNA) lie on the Cytoplasmic side of the membrane. A helical transmembrane segment spans residues 344–364 (IAVQNLGENSAMLLMLGIYSL). The Periplasmic segment spans residues 365–366 (AV). Residues 367–387 (MVGIPVVPIGIGFGALFALAI) traverse the membrane as a helical segment. The Cytoplasmic portion of the chain corresponds to 388–397 (TALWIWQRRH).

The protein belongs to the major facilitator superfamily. LplT (TC 2.A.1.42) family.

The protein resides in the cell inner membrane. Its function is as follows. Catalyzes the facilitated diffusion of 2-acyl-glycero-3-phosphoethanolamine (2-acyl-GPE) into the cell. The polypeptide is Lysophospholipid transporter LplT (Escherichia coli (strain SMS-3-5 / SECEC)).